A 492-amino-acid chain; its full sequence is NADH-quinone oxidoreductase subunit N (492 aa).

A run of 14 helical transmembrane segments spans residues 18-38 (ILPMLVLVCGGIFTLLINAFT), 45-65 (LNMFLCMLFLVLDFLVVLGLE), 80-100 (LSLVSQSIVLISAFLLIFLAL), 108-128 (FQTAEFYPLYLFIIAGFQFMV), 133-153 (LLLMLIGLETASLPICVLMAL), 167-187 (FTMGAMASAFFAMGAMAFYLL), 209-229 (MLFAMGVIFLIGAIGFKVSLV), 250-270 (ISIVPKIAGFVVATRLFGAFI), 277-297 (VEDIFYALILITITIPNLIAL), 305-325 (MLAYSSISHSGFALACVFIHT), 333-353 (FVYWFMFAFTYIGAFGLLWLL), 381-401 (VAILGAIFVFGLAGIPPFSVF), 415-435 (NHILLAAVMLANSAVAVFYYF), and 464-484 (MPIYAVIIAMALVCLFSVFMM).

It belongs to the complex I subunit 2 family. NDH-1 is composed of 14 different subunits. Subunits NuoA, H, J, K, L, M, N constitute the membrane sector of the complex.

It localises to the cell inner membrane. The catalysed reaction is a quinone + NADH + 5 H(+)(in) = a quinol + NAD(+) + 4 H(+)(out). Its function is as follows. NDH-1 shuttles electrons from NADH, via FMN and iron-sulfur (Fe-S) centers, to quinones in the respiratory chain. The immediate electron acceptor for the enzyme in this species is believed to be ubiquinone. Couples the redox reaction to proton translocation (for every two electrons transferred, four hydrogen ions are translocated across the cytoplasmic membrane), and thus conserves the redox energy in a proton gradient. The polypeptide is NADH-quinone oxidoreductase subunit N (Helicobacter acinonychis (strain Sheeba)).